The primary structure comprises 160 residues: Cyclic pyranopterin monophosphate synthase (160 aa).

Substrate-binding positions include 75-77 and 113-114; these read LCH and ME. Residue Asp-128 is part of the active site.

It belongs to the MoaC family. In terms of assembly, homohexamer; trimer of dimers.

The enzyme catalyses (8S)-3',8-cyclo-7,8-dihydroguanosine 5'-triphosphate = cyclic pyranopterin phosphate + diphosphate. It functions in the pathway cofactor biosynthesis; molybdopterin biosynthesis. Catalyzes the conversion of (8S)-3',8-cyclo-7,8-dihydroguanosine 5'-triphosphate to cyclic pyranopterin monophosphate (cPMP). The chain is Cyclic pyranopterin monophosphate synthase from Methylobacterium sp. (strain 4-46).